A 295-amino-acid polypeptide reads, in one-letter code: Protoheme IX farnesyltransferase (295 aa).

9 consecutive transmembrane segments (helical) span residues 8-28 (VTKP…FLLA), 35-55 (YPLF…GCVF), 74-94 (VLVK…LLGI), 106-125 (PLAM…VYSL), 132-152 (VYGT…GYCA), 162-182 (LILL…IAIF), 208-228 (ITLY…GGYA), 233-253 (LVVA…GYKA), and 264-284 (FVFS…DFMV).

The protein belongs to the UbiA prenyltransferase family. Protoheme IX farnesyltransferase subfamily.

The protein localises to the cell inner membrane. The enzyme catalyses heme b + (2E,6E)-farnesyl diphosphate + H2O = Fe(II)-heme o + diphosphate. It participates in porphyrin-containing compound metabolism; heme O biosynthesis; heme O from protoheme: step 1/1. Its function is as follows. Converts heme B (protoheme IX) to heme O by substitution of the vinyl group on carbon 2 of heme B porphyrin ring with a hydroxyethyl farnesyl side group. The sequence is that of Protoheme IX farnesyltransferase from Cronobacter sakazakii (strain ATCC BAA-894) (Enterobacter sakazakii).